Consider the following 187-residue polypeptide: Lysozyme 3 (187 aa).

Residues 1-18 (MNGLFLFCVATTAALAYG) form the signal peptide. The I-type lysozyme domain maps to 68–183 (TGIVSQQCLQ…WSHVHAQGCS (116 aa)). Disulfide bonds link Cys-75-Cys-151, Cys-80-Cys-86, Cys-91-Cys-100, Cys-113-Cys-133, Cys-123-Cys-129, and Cys-147-Cys-165. The Proton donor role is filled by Glu-83. The Nucleophile role is filled by Asp-94. 106 to 112 (KEGYWHD) lines the substrate pocket. Substrate is bound by residues Tyr-137 and 158–160 (HNG).

In terms of tissue distribution, highest levels of expression detected in the digestive glands. Lower levels in the mantle, labial palps, gills and style-midgut sac, and lowest levels detected in the hemocytes. Not detected in the gonads.

Its subcellular location is the secreted. The enzyme catalyses Hydrolysis of (1-&gt;4)-beta-linkages between N-acetylmuramic acid and N-acetyl-D-glucosamine residues in a peptidoglycan and between N-acetyl-D-glucosamine residues in chitodextrins.. Its function is as follows. Has antibacterial activity against the Gram-negative bacterium E.coli. No antibacterial activity detected against the Gram-negative bacterium V.vulnificus. This chain is Lysozyme 3, found in Crassostrea virginica (Eastern oyster).